A 774-amino-acid chain; its full sequence is Glycophorin-binding protein 130 (774 aa).

Residues 84-88 (RILAE) carry the PEXEL motif motif. Disordered regions lie at residues 97–243 (EKTT…AADP), 256–291 (LTNT…EYAS), 310–334 (DPND…PEGQ), 358–383 (NTDP…DPEG), 410–434 (DPND…PEGQ), 458–481 (NTDP…SDPE), 509–533 (DPND…PEGQ), 609–632 (DPND…DPEG), 661–682 (NDEV…DPEG), and 709–734 (DPND…EGQI). 2 stretches are compositionally biased toward basic and acidic residues: residues 117 to 140 (TKKD…SEKQ) and 174 to 198 (KKEE…EPKA). The span at 201 to 228 (VSQKPSTSTRSNNEVKIRAASNQETLTS) shows a compositional bias: polar residues. GBP repeat units follow at residues 226 to 275 (LTSA…NKED), 276 to 325 (LTSA…NKED), 326 to 375 (LTSA…NKED), 376 to 425 (LTSA…NKED), 426 to 474 (LTSA…DNKE), 475 to 524 (LTSS…NKED), 525 to 574 (LTSA…NKEE), 575 to 624 (LTSS…NKED), 625 to 674 (LTSA…NKED), 675 to 724 (LTSA…NKED), and 725 to 774 (LTSA…NNEA). Composition is skewed to basic and acidic residues over residues 264-276 (EVER…KEDL), 314-326 (DVER…KEDL), 364-376 (EVER…KEDL), 414-426 (EVER…KEDL), 464-476 (EVER…KELT), 513-525 (EVER…KEDL), 613-625 (EVER…KEDL), 663-675 (EVER…KEDL), and 713-725 (DVER…KEDL).

Interacts with host glycophorin.

It localises to the secreted. It is found in the cell surface. The protein resides in the host cytoplasm. Functionally, involved in merozoite invasion of host erythrocytes. The polypeptide is Glycophorin-binding protein 130 (Plasmodium falciparum (isolate FCR-3 / Gambia)).